The sequence spans 1162 residues: Nucleoporin nup132 (1162 aa).

Belongs to the nucleoporin Nup133 family. Component of the npc107-120 complex which consists of nup85, nup107, nup120, nup131, nup132 and seh1. Interacts with nup107.

It localises to the nucleus envelope. Functions as a component of the nuclear pore complex (NPC). NPC components, collectively referred to as nucleoporins (NUPs), can play the role of both NPC structural components and of docking or interaction partners for transiently associated nuclear transport factors. Active directional transport is assured by both, a Phe-Gly (FG) repeat affinity gradient for these transport factors across the NPC and a transport cofactor concentration gradient across the nuclear envelope. The chain is Nucleoporin nup132 (nup132) from Schizosaccharomyces pombe (strain 972 / ATCC 24843) (Fission yeast).